The chain runs to 247 residues: Probable transcriptional regulatory protein LAF_0541 (247 aa).

A disordered region spans residues 1 to 22; sequence MSGHSKWHNIQGRKNAQDAKRG.

Belongs to the TACO1 family.

Its subcellular location is the cytoplasm. The protein is Probable transcriptional regulatory protein LAF_0541 of Limosilactobacillus fermentum (strain NBRC 3956 / LMG 18251) (Lactobacillus fermentum).